A 533-amino-acid polypeptide reads, in one-letter code: Spindle pole body protein CSA6 (533 aa).

Disordered regions lie at residues 1–32 (MEDS…SDLT) and 53–130 (DKYD…QEDE). Composition is skewed to basic and acidic residues over residues 18–30 (PEIK…KTSD) and 53–68 (DKYD…DLTP). Over residues 83-94 (PSKFSSSIPQKP) the composition is skewed to low complexity. The span at 103–121 (SSPTKNYTDHINQLRSGPN) shows a compositional bias: polar residues. The stretch at 136-236 (KYEIKRLKQE…RSERDELVKD (101 aa)) forms a coiled coil. Positions 309 to 318 (EKDKPSEDKT) are enriched in basic and acidic residues. Disordered regions lie at residues 309–329 (EKDK…SKDA) and 349–453 (SANS…QSTK). Composition is skewed to polar residues over residues 349-392 (SANS…SNSQ) and 405-421 (IYSS…QSSH). Residues 432–445 (PRVERDHWTDRPPS) show a composition bias toward basic and acidic residues.

It is found in the cytoplasm. The protein localises to the cytoskeleton. Its subcellular location is the microtubule organizing center. It localises to the spindle pole body. Plays a role in mitotic spindle pole body organization, possibly at the point of spindle pole body separation. Required for mitotic exit. The chain is Spindle pole body protein CSA6 from Candida dubliniensis (strain CD36 / ATCC MYA-646 / CBS 7987 / NCPF 3949 / NRRL Y-17841) (Yeast).